The primary structure comprises 240 residues: Ribonuclease PH (240 aa).

Phosphate is bound by residues Arg87 and 125 to 127; that span reads GTR.

Belongs to the RNase PH family. As to quaternary structure, homohexameric ring arranged as a trimer of dimers.

The catalysed reaction is tRNA(n+1) + phosphate = tRNA(n) + a ribonucleoside 5'-diphosphate. Its function is as follows. Phosphorolytic 3'-5' exoribonuclease that plays an important role in tRNA 3'-end maturation. Removes nucleotide residues following the 3'-CCA terminus of tRNAs; can also add nucleotides to the ends of RNA molecules by using nucleoside diphosphates as substrates, but this may not be physiologically important. Probably plays a role in initiation of 16S rRNA degradation (leading to ribosome degradation) during starvation. This Dictyoglomus turgidum (strain DSM 6724 / Z-1310) protein is Ribonuclease PH.